A 112-amino-acid polypeptide reads, in one-letter code: B3 domain-containing protein At1g43171 (112 aa).

Residues 19–112 constitute a DNA-binding region (TF-B3); it reads DIVGNVALPK…FENKFIVLNF (94 aa).

The protein resides in the nucleus. This is B3 domain-containing protein At1g43171 from Arabidopsis thaliana (Mouse-ear cress).